A 344-amino-acid polypeptide reads, in one-letter code: Phenylalanine--tRNA ligase alpha subunit (344 aa).

Residue Glu255 coordinates Mg(2+).

This sequence belongs to the class-II aminoacyl-tRNA synthetase family. Phe-tRNA synthetase alpha subunit type 1 subfamily. In terms of assembly, tetramer of two alpha and two beta subunits. It depends on Mg(2+) as a cofactor.

It localises to the cytoplasm. It carries out the reaction tRNA(Phe) + L-phenylalanine + ATP = L-phenylalanyl-tRNA(Phe) + AMP + diphosphate + H(+). The polypeptide is Phenylalanine--tRNA ligase alpha subunit (Sulfurihydrogenibium sp. (strain YO3AOP1)).